We begin with the raw amino-acid sequence, 479 residues long: ATP synthase subunit beta (479 aa).

153 to 160 contributes to the ATP binding site; that stretch reads GGAGVGKT.

The protein belongs to the ATPase alpha/beta chains family. As to quaternary structure, F-type ATPases have 2 components, CF(1) - the catalytic core - and CF(0) - the membrane proton channel. CF(1) has five subunits: alpha(3), beta(3), gamma(1), delta(1), epsilon(1). CF(0) has three main subunits: a(1), b(2) and c(9-12). The alpha and beta chains form an alternating ring which encloses part of the gamma chain. CF(1) is attached to CF(0) by a central stalk formed by the gamma and epsilon chains, while a peripheral stalk is formed by the delta and b chains.

It is found in the cell membrane. The catalysed reaction is ATP + H2O + 4 H(+)(in) = ADP + phosphate + 5 H(+)(out). In terms of biological role, produces ATP from ADP in the presence of a proton gradient across the membrane. The catalytic sites are hosted primarily by the beta subunits. The sequence is that of ATP synthase subunit beta from Lactobacillus delbrueckii subsp. bulgaricus (strain ATCC BAA-365 / Lb-18).